Reading from the N-terminus, the 31-residue chain is GCISTGSFCTLSKGCCTKNCGWNFKCNPPNQ.

3 cysteine pairs are disulfide-bonded: Cys-2-Cys-16, Cys-9-Cys-20, and Cys-15-Cys-26. Pro-28 and Pro-29 each carry 4-hydroxyproline.

It belongs to the nemertide family. Confined to the epidermis and to the mucus layer.

The protein resides in the secreted. Its function is as follows. Potent toxin, demonstrating strong inhibitory effects on insect sodium channels (Nav) and reduced activity on mammalian sodium channels. Potently inhibits inactivation of insect sodium channels of B.germanica (BgNav1) (EC(50)=11.1 nM). Also delays the inactivation of most mammalian Nav (human Nav1.1/SCN1A; EC(50)=92 nM, rat Nav1.2/SCN2A; EC(50)=134.2 nM, rat Nav1.3/SCN3A; EC(50)=12.9 nM, rat Nav1.4/SCN4A; EC(50)=14.6 nM, human Nav1.5/SCN5A; EC(50)=27.8 nM, mouse Nav1.6/SCN8A; EC(50)=123.6 nM, human Nav1.9/SCN9A; EC(50)=80.5 nM). Inactivation is completely prevented by a concentration of 1 uM, resulting in sustained, non-inactivating currents. In addition, the toxin significantly enhances the recovery from inactivation, and the open state is not required for the toxin to interact with the channel. In vivo, injection into brine shrimp (Artemia salina) stops movement or causes death after 24 hours (EC(50)=0.4 uM). The sequence is that of Nemertide alpha-4 from Lineus sanguineus (Ribbon worm).